A 292-amino-acid polypeptide reads, in one-letter code: MMPVDVCPRDRGSQWVWLEMGQCYSKKSVVPESDTSERSSMTSGSSESDIPQENKVSKASLDTGQMAFTLAQLESLEICLKEAEEKAKALSEQLSVSEGTKSKLLEQVSRLEEKLEAVDHKEASGGPYEKMVLVKDQCIQKLQAEVKASQEQLIAQKLKHEKKVKKLQTDLATANAITVLELNEKIKTLYEGKPAPREDSLLEGFCGGLPPVEEGDRKISLIMELSTQVSLQTERITQLKEVLEEKERKIQQLEAERSPHPPQEVKDPPGCLPEAPVFSTHDIPPVVSDENL.

The segment at 28–55 (SVVPESDTSERSSMTSGSSESDIPQENK) is disordered. A compositionally biased stretch (low complexity) spans 38–49 (RSSMTSGSSESD). Coiled-coil stretches lie at residues 65 to 174 (QMAF…LATA) and 222 to 258 (IMEL…AERS). Residues 251–267 (QQLEAERSPHPPQEVKD) show a composition bias toward basic and acidic residues. Residues 251 to 292 (QQLEAERSPHPPQEVKDPPGCLPEAPVFSTHDIPPVVSDENL) are disordered.

The chain is Coiled-coil domain-containing protein 192 from Homo sapiens (Human).